Here is a 345-residue protein sequence, read N- to C-terminus: Protein-arginine kinase (345 aa).

The Phosphagen kinase C-terminal domain occupies 15–245 (LVISSRIRLA…LQIINQEIIS (231 aa)). ATP contacts are provided by residues 18-22 (SSRIR), His-82, Arg-116, 167-171 (RASVM), and 198-203 (RGLYGE). An RDXXRA motif of the pArg binding pocket involved in allosteric regulation motif is present at residues 328-333 (RDFNRA).

The protein belongs to the ATP:guanido phosphotransferase family.

It catalyses the reaction L-arginyl-[protein] + ATP = N(omega)-phospho-L-arginyl-[protein] + ADP + H(+). Its activity is regulated as follows. Appears to be allosterically activated by the binding of pArg-containing polypeptides to the pArg-binding pocket localized in the C-terminal domain of McsB. Its function is as follows. Catalyzes the specific phosphorylation of arginine residues in proteins. In Clostridium kluyveri (strain NBRC 12016), this protein is Protein-arginine kinase.